The sequence spans 320 residues: Transcription factor bHLH96 (320 aa).

A disordered region spans residues 30–121; the sequence is EEEDQDPQDT…RSSKNKEEIE (92 aa). The span at 65 to 76 shows a compositional bias: acidic residues; it reads YSDDYNYNEEDL. Over residues 104 to 114 the composition is skewed to basic residues; that stretch reads GRRKRRRTRSS. Residues 122–173 form the bHLH domain; that stretch reads NQRMTHIAVERNRRKQMNEYLAVLRSLMPPYYAQRGDQASIVGGAINYLKEL. The tract at residues 184-206 is disordered; it reads VKTATEDTGAGHDQTKTTSASSS. Residues 244–320 enclose the ACT domain; the sequence is SLKILAKKRP…RRIEEESSFS (77 aa).

Homodimer. As to expression, expressed constitutively in roots, leaves, stems, and flowers.

It localises to the nucleus. The sequence is that of Transcription factor bHLH96 (BHLH96) from Arabidopsis thaliana (Mouse-ear cress).